Here is a 290-residue protein sequence, read N- to C-terminus: Membrane protein insertase YidC (290 aa).

Positions 1-19 (MKKKALLPLFLGIMVFLAG) are cleaved as a signal peptide. A lipid anchor (N-palmitoyl cysteine) is attached at Cys-20. Cys-20 carries S-diacylglycerol cysteine lipidation. A run of 5 helical transmembrane segments spans residues 56 to 76 (YGLAIIILVLVIRIILLPFML), 134 to 154 (MLGCLPMLIQLPIIMGLYFVL), 176 to 196 (PDIWITIIAGVLYFIQAYVSS), 207 to 224 (GYMMMVISPIMIIWISLS), and 229 to 251 (LGLYWSVSAAFLVVQTHFANIYY). Positions 270 to 290 (HNGGSNKKGKNTQVVSKKKKK) are disordered.

The protein belongs to the OXA1/ALB3/YidC family. Type 2 subfamily.

The protein localises to the cell membrane. Its function is as follows. Required for the insertion and/or proper folding and/or complex formation of integral membrane proteins into the membrane. Involved in integration of membrane proteins that insert both dependently and independently of the Sec translocase complex, as well as at least some lipoproteins. The polypeptide is Membrane protein insertase YidC (Staphylococcus aureus (strain Mu3 / ATCC 700698)).